Reading from the N-terminus, the 110-residue chain is METIAKHRHARSSAQKVRLVADLIRGKKVSQALETLTYTNKKAAGLVKKVLESAIANAEHNDGADIDDLKVTKIFVDEGPTMKRIMPRAKGRADRILKRSSHITVVVSDR.

Belongs to the universal ribosomal protein uL22 family. As to quaternary structure, part of the 50S ribosomal subunit.

In terms of biological role, this protein binds specifically to 23S rRNA; its binding is stimulated by other ribosomal proteins, e.g. L4, L17, and L20. It is important during the early stages of 50S assembly. It makes multiple contacts with different domains of the 23S rRNA in the assembled 50S subunit and ribosome. The globular domain of the protein is located near the polypeptide exit tunnel on the outside of the subunit, while an extended beta-hairpin is found that lines the wall of the exit tunnel in the center of the 70S ribosome. The protein is Large ribosomal subunit protein uL22 of Photorhabdus laumondii subsp. laumondii (strain DSM 15139 / CIP 105565 / TT01) (Photorhabdus luminescens subsp. laumondii).